The sequence spans 77 residues: UPF0346 protein lin1971 (77 aa).

This sequence belongs to the UPF0346 family.

This is UPF0346 protein lin1971 from Listeria innocua serovar 6a (strain ATCC BAA-680 / CLIP 11262).